The chain runs to 190 residues: dTTP/UTP pyrophosphatase (190 aa).

D67 (proton acceptor) is an active-site residue.

The protein belongs to the Maf family. YhdE subfamily. A divalent metal cation serves as cofactor.

Its subcellular location is the cytoplasm. It carries out the reaction dTTP + H2O = dTMP + diphosphate + H(+). It catalyses the reaction UTP + H2O = UMP + diphosphate + H(+). Nucleoside triphosphate pyrophosphatase that hydrolyzes dTTP and UTP. May have a dual role in cell division arrest and in preventing the incorporation of modified nucleotides into cellular nucleic acids. The protein is dTTP/UTP pyrophosphatase of Aquifex aeolicus (strain VF5).